A 209-amino-acid chain; its full sequence is Ubiquitin-conjugating enzyme E2 S (209 aa).

The UBC core domain occupies 14 to 160 (QTIRQVMREL…ARMMTEIHAQ (147 aa)). The active-site Glycyl thioester intermediate is cysteine 98. The segment at 164–209 (CGVGASGDAKDDDGPSTKKHAGLDKKLQDKKKEKLLKEKKRMLKRL) is disordered. A compositionally biased stretch (basic and acidic residues) spans 171–199 (DAKDDDGPSTKKHAGLDKKLQDKKKEKLL). Residues 200-209 (KEKKRMLKRL) are compositionally biased toward basic residues.

The protein belongs to the ubiquitin-conjugating enzyme family.

The catalysed reaction is S-ubiquitinyl-[E1 ubiquitin-activating enzyme]-L-cysteine + [E2 ubiquitin-conjugating enzyme]-L-cysteine = [E1 ubiquitin-activating enzyme]-L-cysteine + S-ubiquitinyl-[E2 ubiquitin-conjugating enzyme]-L-cysteine.. It functions in the pathway protein modification; protein ubiquitination. In terms of biological role, catalyzes the covalent attachment of ubiquitin to other proteins. Acts as an essential factor of the anaphase promoting complex/cyclosome (APC/C), a cell cycle-regulated ubiquitin ligase that controls progression through mitosis. Acts by specifically elongating polyubiquitin chains initiated by the E2 enzyme vih/UbcH10 on APC/C substrates, enhancing the degradation of APC/C substrates by the proteasome and promoting mitotic exit. The protein is Ubiquitin-conjugating enzyme E2 S of Drosophila yakuba (Fruit fly).